A 488-amino-acid polypeptide reads, in one-letter code: GTPase Der (488 aa).

2 consecutive EngA-type G domains span residues 3 to 166 (PVVA…AEAM) and 200 to 373 (IKLA…DSAT). GTP is bound by residues 9-16 (GRPNVGKS), 56-60 (DTGGI), 118-121 (NKVD), 206-213 (GKPNVGKS), 253-257 (DTAGV), and 318-321 (NKWD). The region spanning 374–458 (RRVSTSMLTR…PIQLRFHEGD (85 aa)) is the KH-like domain.

It belongs to the TRAFAC class TrmE-Era-EngA-EngB-Septin-like GTPase superfamily. EngA (Der) GTPase family. In terms of assembly, associates with the 50S ribosomal subunit.

GTPase that plays an essential role in the late steps of ribosome biogenesis. This chain is GTPase Der, found in Shewanella amazonensis (strain ATCC BAA-1098 / SB2B).